The chain runs to 93 residues: Parbolysin P2 (93 aa).

Cystine bridges form between C16-C37 and C22-C33.

It belongs to the worm cytolysin family. Localized within the skin and proboscis and are most readily isolated from body mucus secretions.

Its subcellular location is the secreted. Cytolysin that shows hemolytic activity (on bovine erythrocytes, HC(50)=5.75 mg/ml). This hemolytic activity is completely inhibited by small unilamelar vesicles composed of PC/PG, PC/PI and PC/PS in 1:1 molar ratios (with at least 100 mg/ml concentration). The protein is Parbolysin P2 of Parborlasia corrugatus (Antarctic nemertean worm).